A 62-amino-acid chain; its full sequence is Large ribosomal subunit protein bL28 (62 aa).

It belongs to the bacterial ribosomal protein bL28 family.

This chain is Large ribosomal subunit protein bL28, found in Syntrophomonas wolfei subsp. wolfei (strain DSM 2245B / Goettingen).